The primary structure comprises 400 residues: Acetate kinase (400 aa).

A Mg(2+)-binding site is contributed by Asn10. Lys17 contacts ATP. Arg91 serves as a coordination point for substrate. Asp150 (proton donor/acceptor) is an active-site residue. Residues 210 to 214 (HLGNG), 285 to 287 (DCR), and 333 to 337 (GIGEN) each bind ATP. Glu387 provides a ligand contact to Mg(2+).

Belongs to the acetokinase family. As to quaternary structure, homodimer. Requires Mg(2+) as cofactor. Mn(2+) is required as a cofactor.

It is found in the cytoplasm. It carries out the reaction acetate + ATP = acetyl phosphate + ADP. Its pathway is metabolic intermediate biosynthesis; acetyl-CoA biosynthesis; acetyl-CoA from acetate: step 1/2. Its function is as follows. Catalyzes the formation of acetyl phosphate from acetate and ATP. Can also catalyze the reverse reaction. The chain is Acetate kinase from Yersinia pseudotuberculosis serotype IB (strain PB1/+).